The following is a 478-amino-acid chain: Glutamyl-tRNA reductase (478 aa).

Substrate-binding positions include 49 to 52 (TCNR), Ser-109, 114 to 116 (EQQ), and Gln-120. Cys-50 functions as the Nucleophile in the catalytic mechanism. 191–196 (GAGSMG) contacts NADP(+).

The protein belongs to the glutamyl-tRNA reductase family. As to quaternary structure, homodimer.

The catalysed reaction is (S)-4-amino-5-oxopentanoate + tRNA(Glu) + NADP(+) = L-glutamyl-tRNA(Glu) + NADPH + H(+). It functions in the pathway porphyrin-containing compound metabolism; protoporphyrin-IX biosynthesis; 5-aminolevulinate from L-glutamyl-tRNA(Glu): step 1/2. Functionally, catalyzes the NADPH-dependent reduction of glutamyl-tRNA(Glu) to glutamate 1-semialdehyde (GSA). This Rhodococcus opacus (strain B4) protein is Glutamyl-tRNA reductase.